The chain runs to 233 residues: Protein TIPIN homolog (233 aa).

Over residues methionine 1–aspartate 14 the composition is skewed to acidic residues. 2 disordered regions span residues methionine 1–glutamate 39 and glycine 134–tryptophan 233. 2 stretches are compositionally biased toward basic and acidic residues: residues aspartate 163–glutamate 190 and glutamate 197–alanine 216. A compositionally biased stretch (acidic residues) spans alanine 217 to glycine 227.

The protein belongs to the CSM3 family.

It is found in the cytoplasm. Its subcellular location is the nucleus. Required for normal progression of S-phase. Important for cell survival after DNA damage or replication stress. This Caenorhabditis elegans protein is Protein TIPIN homolog.